We begin with the raw amino-acid sequence, 375 residues long: Fasciculation and elongation protein zeta-2 (375 aa).

Residues 1 to 42 are disordered; sequence MAADGDWQDFYEFQEPAGSVRDQENCNASPEAGAGAHAGGDS. Phosphoserine is present on residues Ser-130, Ser-171, and Ser-190. Residues 156-177 are a coiled coil; that stretch reads TADQVIEEIEEMMQESPDLEDD. Positions 206–281 form a coiled coil; it reads ERVKRLSVSE…AKKKKKLKNG (76 aa). Positions 265–297 are disordered; the sequence is QKEHKETAKKKKKLKNGSSQNGRNERSHMPGTR.

This sequence belongs to the zygin family. As to quaternary structure, homodimer; disulfide-linked. May form heterodimers with FEZ1. Interacts with synaptotagmin.

Functionally, involved in axonal outgrowth and fasciculation. The protein is Fasciculation and elongation protein zeta-2 (Fez2) of Rattus norvegicus (Rat).